The primary structure comprises 194 residues: Cytochrome c biogenesis ATP-binding export protein CcmA (194 aa).

Residues 5-194 (LALDGVACIR…LDELVMGVLA (190 aa)) enclose the ABC transporter domain. 37–44 (GPNGAGKS) serves as a coordination point for ATP.

This sequence belongs to the ABC transporter superfamily. CcmA exporter (TC 3.A.1.107) family. The complex is composed of two ATP-binding proteins (CcmA) and two transmembrane proteins (CcmB).

It is found in the cell inner membrane. The catalysed reaction is heme b(in) + ATP + H2O = heme b(out) + ADP + phosphate + H(+). In terms of biological role, part of the ABC transporter complex CcmAB involved in the biogenesis of c-type cytochromes; once thought to export heme, this seems not to be the case, but its exact role is uncertain. Responsible for energy coupling to the transport system. This Sphingopyxis alaskensis (strain DSM 13593 / LMG 18877 / RB2256) (Sphingomonas alaskensis) protein is Cytochrome c biogenesis ATP-binding export protein CcmA.